The sequence spans 562 residues: NAD-dependent malic enzyme 1 (562 aa).

Tyr101 functions as the Proton donor in the catalytic mechanism. Residue Arg154 participates in NAD(+) binding. The active-site Proton acceptor is Lys172. Positions 243, 244, and 267 each coordinate a divalent metal cation. Residues Asp267 and Asn415 each coordinate NAD(+).

Belongs to the malic enzymes family. As to quaternary structure, homotetramer. The cofactor is Mg(2+). Requires Mn(2+) as cofactor.

The catalysed reaction is (S)-malate + NAD(+) = pyruvate + CO2 + NADH. It catalyses the reaction oxaloacetate + H(+) = pyruvate + CO2. The polypeptide is NAD-dependent malic enzyme 1 (Vibrio vulnificus (strain YJ016)).